The sequence spans 422 residues: Ameloblastin (422 aa).

Residues 1-26 (MSASKIPLFKMKGLLLFLSLVKMSLA) form the signal peptide. Pro-42 is subject to Hydroxyproline. Residue Ser-48 is modified to Phosphoserine. O-linked (GalNAc...) serine glycosylation occurs at Ser-117. Positions 271–321 (GLNQNSPKGGDFTVEVDSPVSVTKGPEKGEGPEGSPLQEASPDKGENPALL) are disordered.

It belongs to the ameloblastin family. As to expression, ameloblast-specific.

It is found in the secreted. The protein localises to the extracellular space. Its subcellular location is the extracellular matrix. Its function is as follows. Involved in the mineralization and structural organization of enamel. This chain is Ameloblastin (Ambn), found in Rattus norvegicus (Rat).